Consider the following 736-residue polypeptide: Acyl-coenzyme A oxidase (736 aa).

It belongs to the acyl-CoA oxidase family. The cofactor is FAD.

The protein localises to the peroxisome. The enzyme catalyses a 2,3-saturated acyl-CoA + O2 = a (2E)-enoyl-CoA + H2O2. Its pathway is lipid metabolism; peroxisomal fatty acid beta-oxidation. This is Acyl-coenzyme A oxidase (POX1) from Kluyveromyces lactis (strain ATCC 8585 / CBS 2359 / DSM 70799 / NBRC 1267 / NRRL Y-1140 / WM37) (Yeast).